The primary structure comprises 445 residues: 6-phosphogluconate dehydrogenase, decarboxylating (445 aa).

NADP(+) contacts are provided by residues 1-4 (AVMG), 22-24 (NRS), 63-65 (VKA), and N91. Residues N91 and 117–119 (SGG) contribute to the substrate site. The active-site Proton acceptor is K172. 175 to 176 (HN) lines the substrate pocket. The active-site Proton donor is the E179. Residues Y180, K249, R276, R434, and H440 each contribute to the substrate site.

This sequence belongs to the 6-phosphogluconate dehydrogenase family. Homodimer.

It carries out the reaction 6-phospho-D-gluconate + NADP(+) = D-ribulose 5-phosphate + CO2 + NADPH. The protein operates within carbohydrate degradation; pentose phosphate pathway; D-ribulose 5-phosphate from D-glucose 6-phosphate (oxidative stage): step 3/3. Its function is as follows. Catalyzes the oxidative decarboxylation of 6-phosphogluconate to ribulose 5-phosphate and CO(2), with concomitant reduction of NADP to NADPH. The polypeptide is 6-phosphogluconate dehydrogenase, decarboxylating (gnd) (Shigella boydii).